A 253-amino-acid chain; its full sequence is MDQPGDTTHFGFRDVPLGDKQTLVNGVFHNVAQRYDLMNDLMSAGLHRVWKDATITALNPPRNDTPFALLDVAGGTGDIAFRAAKAAGLGFRATVCDINPDMLAVGHERAIKQHLDHQVSFVEGNAETLAFADRSFDAYTIAFGIRNVPRIDSALREAFRVLKPGGRFLCLEFSTVDVPGLDKIYDLFSFKVIPPLGRAVTGDADSYQYLVESIRKFPKPNAFADMIRDAGFARVTWQVLSGGIVALHSGWRL.

S-adenosyl-L-methionine contacts are provided by residues T76, D97, and 125-126 (NA).

It belongs to the class I-like SAM-binding methyltransferase superfamily. MenG/UbiE family.

It carries out the reaction a 2-demethylmenaquinol + S-adenosyl-L-methionine = a menaquinol + S-adenosyl-L-homocysteine + H(+). It catalyses the reaction a 2-methoxy-6-(all-trans-polyprenyl)benzene-1,4-diol + S-adenosyl-L-methionine = a 5-methoxy-2-methyl-3-(all-trans-polyprenyl)benzene-1,4-diol + S-adenosyl-L-homocysteine + H(+). It participates in quinol/quinone metabolism; menaquinone biosynthesis; menaquinol from 1,4-dihydroxy-2-naphthoate: step 2/2. It functions in the pathway cofactor biosynthesis; ubiquinone biosynthesis. In terms of biological role, methyltransferase required for the conversion of demethylmenaquinol (DMKH2) to menaquinol (MKH2) and the conversion of 2-polyprenyl-6-methoxy-1,4-benzoquinol (DDMQH2) to 2-polyprenyl-3-methyl-6-methoxy-1,4-benzoquinol (DMQH2). The sequence is that of Ubiquinone/menaquinone biosynthesis C-methyltransferase UbiE from Nitrobacter hamburgensis (strain DSM 10229 / NCIMB 13809 / X14).